We begin with the raw amino-acid sequence, 136 residues long: MKHQNPSKRLLRLSIKYLLAAAAVVLTYFAVIYILFSLAGTSYRSAAHVLLFAVVFLVLGLCFEPFERLMIHSFTFFKTGKRLFILLAGIVQLLFLWMTAHTTDQLISDIWLSTTEEMIVAAVFLILDKCNSALPS.

4 consecutive transmembrane segments (helical) span residues 18–38 (LLAAAAVVLTYFAVIYILFSL), 46–66 (AAHVLLFAVVFLVLGLCFEPF), 83–103 (LFILLAGIVQLLFLWMTAHTT), and 106–126 (LISDIWLSTTEEMIVAAVFLI).

The protein localises to the cell membrane. In terms of biological role, negatively regulates RNA polymerase sigma factor SigO-dependent transcription. Prevents the expression or secretion of OxdC under nonstress conditions. May act as an anti-sigma factor. This chain is Membrane-bound negative regulator YvrL (yvrL), found in Bacillus subtilis (strain 168).